Consider the following 733-residue polypeptide: Phosphoribosylformylglycinamidine synthase subunit PurL (733 aa).

Residue His-41 is part of the active site. ATP-binding residues include Tyr-44 and Lys-83. Glu-85 contributes to the Mg(2+) binding site. Substrate is bound by residues 86–89 and Arg-108; that span reads SHNH. His-87 (proton acceptor) is an active-site residue. Asp-109 is a Mg(2+) binding site. The segment at 212–232 is disordered; that stretch reads GASFASQELSEESEEKRPSVQ. Gln-232 contributes to the substrate binding site. Asp-260 contributes to the Mg(2+) binding site. A substrate-binding site is contributed by 304 to 306; it reads ESQ. Asp-488 and Gly-525 together coordinate ATP. Asn-526 is a Mg(2+) binding site. A substrate-binding site is contributed by Ser-528.

This sequence belongs to the FGAMS family. Monomer. Part of the FGAM synthase complex composed of 1 PurL, 1 PurQ and 2 PurS subunits.

The protein resides in the cytoplasm. It catalyses the reaction N(2)-formyl-N(1)-(5-phospho-beta-D-ribosyl)glycinamide + L-glutamine + ATP + H2O = 2-formamido-N(1)-(5-O-phospho-beta-D-ribosyl)acetamidine + L-glutamate + ADP + phosphate + H(+). It participates in purine metabolism; IMP biosynthesis via de novo pathway; 5-amino-1-(5-phospho-D-ribosyl)imidazole from N(2)-formyl-N(1)-(5-phospho-D-ribosyl)glycinamide: step 1/2. In terms of biological role, part of the phosphoribosylformylglycinamidine synthase complex involved in the purines biosynthetic pathway. Catalyzes the ATP-dependent conversion of formylglycinamide ribonucleotide (FGAR) and glutamine to yield formylglycinamidine ribonucleotide (FGAM) and glutamate. The FGAM synthase complex is composed of three subunits. PurQ produces an ammonia molecule by converting glutamine to glutamate. PurL transfers the ammonia molecule to FGAR to form FGAM in an ATP-dependent manner. PurS interacts with PurQ and PurL and is thought to assist in the transfer of the ammonia molecule from PurQ to PurL. In Thermoanaerobacter sp. (strain X514), this protein is Phosphoribosylformylglycinamidine synthase subunit PurL.